We begin with the raw amino-acid sequence, 395 residues long: Na(+)/H(+) antiporter NhaA (395 aa).

11 consecutive transmembrane segments (helical) span residues 15-35, 66-86, 101-121, 132-152, 161-181, 184-204, 219-239, 265-285, 301-321, 339-359, and 366-386; these read FLGSPSGGACVLLLASLAGFV, IDAWVSDGFMTLFFLVVILEI, VALPLIGALGGMIVPALTYLL, GWAIPVATDAAFTLPIILALG, AWLMALAIFDDVLGIVVIAVF, NALYWPALAAAVVVTAALIGA, CILLWIALLGSGLHPTLAGVI, ALTPVVTWVILPLFGFMNVGV, LGIMSGLLIGKPVGVFSATLL, VFGLSLLCGIGFTISLFIANL, and LVIPAKMGIFAGSVLSALAGW.

This sequence belongs to the NhaA Na(+)/H(+) (TC 2.A.33) antiporter family.

The protein localises to the cell inner membrane. It carries out the reaction Na(+)(in) + 2 H(+)(out) = Na(+)(out) + 2 H(+)(in). Functionally, na(+)/H(+) antiporter that extrudes sodium in exchange for external protons. In Gluconacetobacter diazotrophicus (strain ATCC 49037 / DSM 5601 / CCUG 37298 / CIP 103539 / LMG 7603 / PAl5), this protein is Na(+)/H(+) antiporter NhaA.